The chain runs to 309 residues: Probable inactive poly [ADP-ribose] polymerase SRO5 (309 aa).

Positions 28 to 255 (CDSSSDRSFA…AFPVLIKALS (228 aa)) constitute a PARP catalytic domain. The RST domain maps to 238–309 (KRLRSPWMAF…IKACGHKVQH (72 aa)).

As to quaternary structure, interacts with dehydration-responsive DREB2 proteins and a number of transcription factors belonging to several protein families.

The protein localises to the nucleus matrix. In terms of biological role, probable inactive ADP-ribosyltransferase that may be involved in stress and developmental responses. In Arabidopsis thaliana (Mouse-ear cress), this protein is Probable inactive poly [ADP-ribose] polymerase SRO5 (SRO5).